A 620-amino-acid chain; its full sequence is GTP-binding protein At3g49725, chloroplastic (620 aa).

A chloroplast-targeting transit peptide spans methionine 1–arginine 65. A disordered region spans residues serine 57 to proline 100. Residues glycine 346–lysine 585 enclose the Hflx-type G domain. Residues glycine 352 to serine 359, phenylalanine 377 to aspartate 381, aspartate 399 to glycine 402, and asparagine 468 to aspartate 471 contribute to the GTP site. Positions 359 and 379 each coordinate Mg(2+). Acidic residues-rich tracts occupy residues glutamate 478–alanine 497 and threonine 511–aspartate 521. Positions glutamate 478 to aspartate 521 are disordered. Serine 563–leucine 565 lines the GTP pocket. The segment at leucine 597–arginine 620 is disordered.

The protein belongs to the TRAFAC class OBG-HflX-like GTPase superfamily. HflX GTPase family. It depends on Mg(2+) as a cofactor.

It is found in the plastid. The protein resides in the chloroplast. The sequence is that of GTP-binding protein At3g49725, chloroplastic from Arabidopsis thaliana (Mouse-ear cress).